Consider the following 213-residue polypeptide: General transcription factor 3C polypeptide 6 (213 aa).

Residues 1–11 (MAAAADERSPE) show a composition bias toward basic and acidic residues. 2 disordered regions span residues 1–20 (MAAAADERSPEDGEDEEEEE) and 191–213 (SGPLIDIPSETEGSVFMETQMLP). Ala2 carries the post-translational modification N-acetylalanine. Ser9 carries the post-translational modification Phosphoserine.

This sequence belongs to the TFIIIC subunit 6 family. In terms of assembly, part of the TFIIIC subcomplex TFIIIC2, consisting of six subunits, GTF3C1, GTF3C2, GTF3C3, GTF3C4, GTF3C5 and GTF3C6. Interacts with GTF3C4 and GTF3C5.

It localises to the nucleus. Functionally, involved in RNA polymerase III-mediated transcription. Integral, tightly associated component of the DNA-binding TFIIIC2 subcomplex that directly binds tRNA and virus-associated RNA promoters. This chain is General transcription factor 3C polypeptide 6 (GTF3C6), found in Homo sapiens (Human).